Here is a 308-residue protein sequence, read N- to C-terminus: MLKVAFQMDEDVVVGRDVSVKLVEEAQRRGHEVFFYRPTSLAFVCGELVAEAFSVRVGADSLHFHDKTRLPLGKLDMLFVRQNPPFDMRYVTTTYLLERLDILMINNPKAIRDHPEKLLPLSFPKFIPPTLITESVSEISAFYAEYGDIVLKPLYDYGGNGVCRICGRADVGAISSAMVERYEAPLVAQQFIDDISSDKRVVLLGGRPIGAVRRKVTAMGEIRTNLRVGATPEATELSDREREICHDVGMLLSSVDILFAGIDILGGHLIEVNVTSPCGILEINQVYGKTLERDCWDYFEYALLHRSP.

The ATP-grasp domain maps to lysine 117–glutamate 300. Tyrosine 143–aspartate 198 lines the ATP pocket. Mg(2+) is bound by residues glutamate 271 and asparagine 273.

Belongs to the prokaryotic GSH synthase family. Requires Mg(2+) as cofactor. Mn(2+) is required as a cofactor.

The catalysed reaction is gamma-L-glutamyl-L-cysteine + glycine + ATP = glutathione + ADP + phosphate + H(+). The protein operates within sulfur metabolism; glutathione biosynthesis; glutathione from L-cysteine and L-glutamate: step 2/2. The protein is Glutathione synthetase of Anaplasma centrale.